We begin with the raw amino-acid sequence, 448 residues long: Vimentin (448 aa).

Residues proline 1–glutamate 77 form a head region. Residue serine 9 is modified to Phosphoserine. O-linked (GlcNAc) threonine glycosylation is present at threonine 16. Serine 17 is subject to Phosphoserine; by PKC; alternate. O-linked (GlcNAc) serine; alternate glycosylation occurs at serine 17. Position 22 is a phosphoserine; by CaMK2, PKA, PKC and ROCK2 (serine 22). Serine 29, serine 31, and serine 33 each carry phosphoserine. A Phosphotyrosine modification is found at tyrosine 35. Serine 37 bears the Phosphoserine mark. Phosphoserine; by CDK5 and CDK1 is present on serine 38. Tyrosine 43 carries the post-translational modification Phosphotyrosine. The residue at position 48 (serine 48) is a Phosphoserine; by PKA and PKC. Residue serine 54 is modified to Phosphoserine; by AURKB and ROCK2. A Phosphoserine modification is found at serine 55. Position 65 is a phosphoserine; by CaMK2 (serine 65). Serine 69 is modified (phosphoserine). The segment at phenylalanine 78–leucine 113 is coil 1A. Positions phenylalanine 78–leucine 113 form a coiled coil. Residues glutamate 85–isoleucine 393 form the IF rod domain. A Glycyl lysine isopeptide (Lys-Gly) (interchain with G-Cter in SUMO2) cross-link involves residue lysine 86. Phosphotyrosine is present on tyrosine 99. Lysine 102, lysine 111, and lysine 121 each carry N6-acetyllysine; alternate. Residues lysine 102 and lysine 111 each carry the N6-succinyllysine; alternate modification. Glycyl lysine isopeptide (Lys-Gly) (interchain with G-Cter in SUMO2); alternate cross-links involve residues lysine 102, lysine 111, and lysine 121. Positions leucine 114–glutamate 135 are linker 1. Serine 126 carries the post-translational modification Phosphoserine. Residues methionine 136–leucine 227 are a coiled coil. Residues methionine 136–leucine 227 form a coil 1B region. N6-acetyllysine is present on lysine 150. Position 170 is an N6-acetyllysine; alternate (lysine 170). At lysine 170 the chain carries N6-succinyllysine; alternate. Position 196 is a phosphoserine (serine 196). Lysine 205 carries the N6-acetyllysine; alternate modification. Residue lysine 205 forms a Glycyl lysine isopeptide (Lys-Gly) (interchain with G-Cter in SUMO2); alternate linkage. Position 208 is a phosphoserine (serine 208). Lysine 217 carries the N6-acetyllysine modification. Residues glutamine 228–alanine 250 form a linker 12 region. Residue lysine 244 forms a Glycyl lysine isopeptide (Lys-Gly) (interchain with G-Cter in SUMO2) linkage. The tract at residues leucine 251–glutamate 389 is coil 2. Lysine 276 is modified (N6-acetyllysine; alternate). The residue at position 276 (lysine 276) is an N6-succinyllysine; alternate. Residue lysine 276 forms a Glycyl lysine isopeptide (Lys-Gly) (interchain with G-Cter in SUMO2); alternate linkage. Serine 281 bears the Phosphoserine mark. Residues asparagine 285–glutamate 389 are a coiled coil. Lysine 295 is covalently cross-linked (Glycyl lysine isopeptide (Lys-Gly) (interchain with G-Cter in SUMO2)). Serine 307 carries the phosphoserine modification. A [IL]-x-C-x-x-[DE] motif motif is present at residues leucine 308 to glutamate 311. Lysine 355 carries the N6-acetyllysine; alternate modification. Lysine 355 participates in a covalent cross-link: Glycyl lysine isopeptide (Lys-Gly) (interchain with G-Cter in SUMO2); alternate. Residues glutamate 390–glutamate 448 form a tail region. Serine 391, serine 394, serine 401, and serine 402 each carry phosphoserine. A Phosphothreonine modification is found at threonine 408. Serine 412 carries the phosphoserine modification. Position 418 is a phosphothreonine (threonine 418). Serine 420 carries the post-translational modification Phosphoserine. Residue lysine 421 forms a Glycyl lysine isopeptide (Lys-Gly) (interchain with G-Cter in SUMO2) linkage. Residue lysine 427 is modified to N6-acetyllysine; alternate. At lysine 427 the chain carries N6-succinyllysine; alternate. Lysine 427 is covalently cross-linked (Glycyl lysine isopeptide (Lys-Gly) (interchain with G-Cter in SUMO2); alternate). Residue lysine 427 forms a Glycyl lysine isopeptide (Lys-Gly) (interchain with G-Cter in SUMO1); alternate linkage. A phosphothreonine mark is found at threonine 428 and threonine 440. Residue serine 441 is modified to Phosphoserine.

Belongs to the intermediate filament family. In terms of assembly, homomer assembled from elementary dimers. Identified in complexes that contain VIM, EZR, AHNAK, BFSP1, BFSP2, ANK2, PLEC, PRX and spectrin. Interacts with BCAS3. Interacts with LGSN. Interacts with SYNM. Interacts (via rod region) with PLEC (via CH 1 domain). Interacts with STK33. Interacts with LARP6. Interacts with RAB8B. Interacts with TOR1A; the interaction associates TOR1A with the cytoskeleton. Interacts with TOR1AIP1. Interacts with TOR1AIP1. Interacts with DIAPH1. Interacts with EPPK1; interaction is dependent of higher-order structure of intermediate filament. Interacts with the non-receptor tyrosine kinase SRMS; the interaction leads to phosphorylation of VIM. Interacts with NOD2. Interacts (via head region) with CORO1C. Interacts with HDGF. Interacts with PRKCE (via phorbol-ester/DAG-type 2 domain). Interacts with BFSP2. Interacts with PPL. Interacts with PKP1 and PKP2. Interacts with SCRIB (via PDZ domains); the interaction protects SCRIB from proteasomal degradation and facilitates SCRIB localization to intermediate filaments, the interaction is reduced by cell contact inhibition. One of the most prominent phosphoproteins in various cells of mesenchymal origin. Phosphorylation is enhanced during cell division, at which time vimentin filaments are significantly reorganized. Phosphorylation by PKN1 inhibits the formation of filaments. Filament disassembly during mitosis is promoted by phosphorylation at Ser-37 as well as by nestin. Phosphorylated at Ser-38 by CDK5 during neutrophil secretion in the cytoplasm. Phosphorylated by STK33. Phosphorylated on tyrosine residues by SRMS. Post-translationally, S-nitrosylation is induced by interferon-gamma and oxidatively-modified low-densitity lipoprotein (LDL(ox)) possibly implicating the iNOS-S100A8/9 transnitrosylase complex.

It localises to the cytoplasm. Its subcellular location is the cytoskeleton. It is found in the nucleus matrix. The protein resides in the cell membrane. Its function is as follows. Vimentins are class-III intermediate filaments found in various non-epithelial cells, especially mesenchymal cells. Vimentin is attached to the nucleus, endoplasmic reticulum, and mitochondria, either laterally or terminally. Plays a role in cell directional movement, orientation, cell sheet organization and Golgi complex polarization at the cell migration front. Protects SCRIB from proteasomal degradation and facilitates its localization to intermediate filaments in a cell contact-mediated manner. In terms of biological role, involved with LARP6 in the stabilization of type I collagen mRNAs for CO1A1 and CO1A2. The protein is Vimentin (VIM) of Cricetulus griseus (Chinese hamster).